We begin with the raw amino-acid sequence, 388 residues long: Arginine biosynthesis bifunctional protein ArgJ (388 aa).

The substrate site is built by Thr-150, Lys-172, Thr-183, Glu-263, Asn-383, and Thr-388. Catalysis depends on Thr-183, which acts as the Nucleophile.

It belongs to the ArgJ family. As to quaternary structure, heterotetramer of two alpha and two beta chains.

Its subcellular location is the cytoplasm. The enzyme catalyses N(2)-acetyl-L-ornithine + L-glutamate = N-acetyl-L-glutamate + L-ornithine. The catalysed reaction is L-glutamate + acetyl-CoA = N-acetyl-L-glutamate + CoA + H(+). It participates in amino-acid biosynthesis; L-arginine biosynthesis; L-ornithine and N-acetyl-L-glutamate from L-glutamate and N(2)-acetyl-L-ornithine (cyclic): step 1/1. The protein operates within amino-acid biosynthesis; L-arginine biosynthesis; N(2)-acetyl-L-ornithine from L-glutamate: step 1/4. Catalyzes two activities which are involved in the cyclic version of arginine biosynthesis: the synthesis of N-acetylglutamate from glutamate and acetyl-CoA as the acetyl donor, and of ornithine by transacetylation between N(2)-acetylornithine and glutamate. The protein is Arginine biosynthesis bifunctional protein ArgJ of Corynebacterium efficiens (strain DSM 44549 / YS-314 / AJ 12310 / JCM 11189 / NBRC 100395).